The following is a 136-amino-acid chain: Large ribosomal subunit protein uL16 (136 aa).

This sequence belongs to the universal ribosomal protein uL16 family. As to quaternary structure, part of the 50S ribosomal subunit.

Binds 23S rRNA and is also seen to make contacts with the A and possibly P site tRNAs. The sequence is that of Large ribosomal subunit protein uL16 from Buchnera aphidicola subsp. Acyrthosiphon pisum (strain 5A).